Here is a 199-residue protein sequence, read N- to C-terminus: Probable GTP-binding protein EngB (199 aa).

One can recognise an EngB-type G domain in the interval 21-195 (IYTEIAFLGR…EQKIILESLG (175 aa)). Residues 29 to 36 (GRSNVGKS), 56 to 60 (GKTQL), 81 to 84 (DLPG), 151 to 154 (TKAD), and 174 to 176 (VSN) contribute to the GTP site. 2 residues coordinate Mg(2+): S36 and T58.

It belongs to the TRAFAC class TrmE-Era-EngA-EngB-Septin-like GTPase superfamily. EngB GTPase family. The cofactor is Mg(2+).

In terms of biological role, necessary for normal cell division and for the maintenance of normal septation. The sequence is that of Probable GTP-binding protein EngB from Campylobacter lari (strain RM2100 / D67 / ATCC BAA-1060).